We begin with the raw amino-acid sequence, 144 residues long: Large ribosomal subunit protein uL15 (144 aa).

Residues 1–49 (MRLNTLSPAAGAKSAAKRVGRGIGSGTGKTCGRGHKGQKSRSGGGVRVG) form a disordered region. A compositionally biased stretch (gly residues) spans 21 to 31 (RGIGSGTGKTC).

The protein belongs to the universal ribosomal protein uL15 family. Part of the 50S ribosomal subunit.

Binds to the 23S rRNA. This Shewanella sediminis (strain HAW-EB3) protein is Large ribosomal subunit protein uL15.